The primary structure comprises 645 residues: Acetyl-coenzyme A synthetase (645 aa).

CoA-binding positions include R190–R193 and T308. Residues G384–P386, D408–T413, D497, and R512 contribute to the ATP site. S520 is a CoA binding site. Position 523 (R523) interacts with ATP. Positions 534, 536, and 539 each coordinate Mg(2+). K606 is subject to N6-acetyllysine.

This sequence belongs to the ATP-dependent AMP-binding enzyme family. The cofactor is Mg(2+). Post-translationally, acetylated. Deacetylation by the SIR2-homolog deacetylase activates the enzyme.

It catalyses the reaction acetate + ATP + CoA = acetyl-CoA + AMP + diphosphate. Functionally, catalyzes the conversion of acetate into acetyl-CoA (AcCoA), an essential intermediate at the junction of anabolic and catabolic pathways. AcsA undergoes a two-step reaction. In the first half reaction, AcsA combines acetate with ATP to form acetyl-adenylate (AcAMP) intermediate. In the second half reaction, it can then transfer the acetyl group from AcAMP to the sulfhydryl group of CoA, forming the product AcCoA. The polypeptide is Acetyl-coenzyme A synthetase (Saccharophagus degradans (strain 2-40 / ATCC 43961 / DSM 17024)).